A 98-amino-acid polypeptide reads, in one-letter code: DNA-binding protein Fis (98 aa).

Residues 74–93 constitute a DNA-binding region (H-T-H motif); that stretch reads QTRAALMLGINRSTLRKKLK.

The protein belongs to the transcriptional regulatory Fis family. As to quaternary structure, homodimer.

Functionally, activates ribosomal RNA transcription. Plays a direct role in upstream activation of rRNA promoters. The protein is DNA-binding protein Fis of Buchnera aphidicola subsp. Acyrthosiphon pisum (strain 5A).